Here is a 159-residue protein sequence, read N- to C-terminus: Protein E6 (159 aa).

Zinc fingers lie at residues 35–71 (CVYCRRALSDADVLAFAIKELSVVWRKGFPFGACGKC) and 108–144 (CYICHKPLSWEEKEALLVGNKRFHNISGRWTGHCMQC).

Belongs to the papillomaviridae E6 protein family. Forms homodimers. Interacts with ubiquitin-protein ligase UBE3A/E6-AP; this interaction stimulates UBE3A ubiquitin activity. Interacts with host TP53 and EP300; this interaction inhibits TP53 activity.

The protein localises to the host cytoplasm. Its subcellular location is the host nucleus. Plays a major role in the induction and maintenance of cellular transformation. E6 associates with host UBE3A/E6-AP ubiquitin-protein ligase and modulates its activity. Sequesters tumor suppressor TP53 in the host cytoplasm and modulates its activity by interacting with host EP300 that results in the reduction of TP53 acetylation and activation. In turn, apoptosis induced by DNA damage is inhibited. E6 also protects host keratinocytes from apoptosis by mediating the degradation of host BAK1. May also inhibit host immune response. The sequence is that of Protein E6 from Homo sapiens (Human).